The following is a 476-amino-acid chain: Aspartyl/glutamyl-tRNA(Asn/Gln) amidotransferase subunit B (476 aa).

This sequence belongs to the GatB/GatE family. GatB subfamily. In terms of assembly, heterotrimer of A, B and C subunits.

The catalysed reaction is L-glutamyl-tRNA(Gln) + L-glutamine + ATP + H2O = L-glutaminyl-tRNA(Gln) + L-glutamate + ADP + phosphate + H(+). The enzyme catalyses L-aspartyl-tRNA(Asn) + L-glutamine + ATP + H2O = L-asparaginyl-tRNA(Asn) + L-glutamate + ADP + phosphate + 2 H(+). In terms of biological role, allows the formation of correctly charged Asn-tRNA(Asn) or Gln-tRNA(Gln) through the transamidation of misacylated Asp-tRNA(Asn) or Glu-tRNA(Gln) in organisms which lack either or both of asparaginyl-tRNA or glutaminyl-tRNA synthetases. The reaction takes place in the presence of glutamine and ATP through an activated phospho-Asp-tRNA(Asn) or phospho-Glu-tRNA(Gln). This chain is Aspartyl/glutamyl-tRNA(Asn/Gln) amidotransferase subunit B, found in Moorella thermoacetica (strain ATCC 39073 / JCM 9320).